We begin with the raw amino-acid sequence, 199 residues long: Thymidine kinase (199 aa).

ATP is bound by residues 9–16 (GAMSSGKS) and 93–96 (DEAQ). The Proton acceptor role is filled by glutamate 94. Residues cysteine 151, cysteine 154, cysteine 188, and histidine 191 each coordinate Zn(2+).

It belongs to the thymidine kinase family. Homotetramer.

It is found in the cytoplasm. The catalysed reaction is thymidine + ATP = dTMP + ADP + H(+). In Lactobacillus johnsonii (strain CNCM I-12250 / La1 / NCC 533), this protein is Thymidine kinase.